A 338-amino-acid chain; its full sequence is MSNRELRVGLVGAGLMGSDHATRIHRRISGASLVAVGDPDLERAERAAAGIEGCQVETDPLKVIEASDVDAVVLATPGRTHEPLLLAAIERGIPVLCEKPLTPDSKSSLRVVEAEVAAGRRLVQVGFMRRFDPEYAELKRTLHAGALGRPLLMHCAHRNASAPPGFTSQMMIFDSVVHEFDTTRWLLGEEITAVSVRHPRSTANAPSGMTDPQLVTIETASGVLVTVEIFVNCGFGYQVRCEAVCEGGTAQVGGDSGMTTHVRGAWGGSVAPDFRPRFQQAFDEELQRWADAARAGGIDGASAWDGCAAAAACEAGVAAQTSGARTPVQLVERPGLYA.

Belongs to the Gfo/Idh/MocA family. In terms of assembly, homotetramer.

The catalysed reaction is myo-inositol + NAD(+) = scyllo-inosose + NADH + H(+). Functionally, involved in the oxidation of myo-inositol (MI) to 2-keto-myo-inositol (2KMI or 2-inosose). The sequence is that of Inositol 2-dehydrogenase 4 from Saccharopolyspora erythraea (strain ATCC 11635 / DSM 40517 / JCM 4748 / NBRC 13426 / NCIMB 8594 / NRRL 2338).